Reading from the N-terminus, the 366-residue chain is Growth hormone secretagogue receptor type 1 (366 aa).

The Extracellular segment spans residues 1–40; it reads MWNATLSEEPGYNLTLPDLGWDAPADNDSLTDELLPLFPA. N-linked (GlcNAc...) asparagine glycans are attached at residues Asn3, Asn13, and Asn27. Residues 41-66 traverse the membrane as a helical segment; that stretch reads PLLAGVTATCVALFVVGIAGNLLTML. Residues 67–72 are Cytoplasmic-facing; that stretch reads VVSRFR. A helical transmembrane segment spans residues 73 to 96; sequence ELRTTTNLYLSSMAFSDLLIFLCM. Residues 97-117 lie on the Extracellular side of the membrane; the sequence is PLDLVRLWQYRPWNFGDLLCK. Cys116 and Cys198 form a disulfide bridge. Residues 118 to 139 form a helical membrane-spanning segment; that stretch reads LFQFVSESCTYATVLTITALSV. Over 140 to 162 the chain is Cytoplasmic; the sequence is ERYFAICFPLRAKVVVTKGRVKL. A helical transmembrane segment spans residues 163–183; that stretch reads VILVIWAVAFCSAGPIFVLVG. The Extracellular segment spans residues 184 to 211; that stretch reads VEHENGTDPRDTNECRATEFAVRSGLLT. A glycan (N-linked (GlcNAc...) asparagine) is linked at Asn188. The helical transmembrane segment at 212-235 threads the bilayer; that stretch reads VMVWVSSVFFFLPVFCLTVLYSLI. Over 236 to 263 the chain is Cytoplasmic; it reads GRKLWRRKRGEAAVGASLRDQNHKQTVK. The chain crosses the membrane as a helical span at residues 264–285; sequence MLAVVVFAFILCWLPFHVGRYL. Residues 286–302 are Extracellular-facing; the sequence is FSKSFEPGSLEIAQISQ. Residues 303-326 form a helical membrane-spanning segment; sequence YCNLVSFVLFYLSAAINPILYNIM. Residues 327-366 lie on the Cytoplasmic side of the membrane; sequence SKKYRVAVFKLLGFEPFSQRKLSTLKDESSRAWTETSINT.

This sequence belongs to the G-protein coupled receptor 1 family.

It is found in the cell membrane. Receptor for ghrelin, coupled to G-alpha-11 proteins. Stimulates growth hormone secretion. Also binds other growth hormone releasing peptides (GHRP) (e.g. Met-enkephalin and GHRP-6) as well as non-peptide, low molecular weight secretagogues (e.g. L-692,429, MK-0677, adenosine). This Mustela putorius furo (European domestic ferret) protein is Growth hormone secretagogue receptor type 1 (GHSR).